The chain runs to 497 residues: MDAMKYNDLRDFLTLLEQQGELKRITLPVDPHLEITEIADRTLRAGGPALLFENPKGYSMPVLCNLFGTPKRVAMGMGQEDVSALREVGKLLAFLKEPEPPKGFRDLFDKLPQFKQVLNMPTKRLRGVPCQQKIVSGDDVDLNRIPIMTCWPEDAAPLITWGLTVTRGPHKERQNLGIYRQQLIGKNKLIMRWLSHRGGALDYQEWCAAHPGERFPVSVALGADPATILGAVTPVPDTLSEYAFAGLLRGTKTEVVKCISNDLEVPASAEIVLEGYIEQGETAPEGPYGDHTGYYNEVDSFPVFTVTHITQREDAIYHSTYTGRPPDEPAVLGVALNEVFVPILQKQFPEIVDFYLPPEGCSYRLAVVTIKKQYAGHAKRVMMGVWSFLRQFMYTKFVIVCDDDVNARDWNDVIWAITTRMDPARDTVLVENTPIDYLDFASPVSGLGSKMGLDATNKWPGETQREWGRPIKKDPDVVAHIDAIWDELAIFNNGKSA.

Residue Asn175 participates in Mn(2+) binding. Residues 178–180 (IYR), 192–194 (RWL), and 197–198 (RG) each bind prenylated FMN. Glu241 lines the Mn(2+) pocket. The active-site Proton donor is Asp290.

It belongs to the UbiD family. Homohexamer. The cofactor is prenylated FMN. It depends on Mn(2+) as a cofactor.

The protein localises to the cell membrane. It carries out the reaction a 4-hydroxy-3-(all-trans-polyprenyl)benzoate + H(+) = a 2-(all-trans-polyprenyl)phenol + CO2. Its pathway is cofactor biosynthesis; ubiquinone biosynthesis. In terms of biological role, catalyzes the decarboxylation of 3-octaprenyl-4-hydroxy benzoate to 2-octaprenylphenol, an intermediate step in ubiquinone biosynthesis. This Shigella boydii serotype 4 (strain Sb227) protein is 3-octaprenyl-4-hydroxybenzoate carboxy-lyase.